The following is a 379-amino-acid chain: Chaperone protein DnaJ (379 aa).

One can recognise a J domain in the interval 5-70 (DYYESLGVAK…QKRAAYDQYG (66 aa)). The CR-type zinc-finger motif lies at 134–212 (GVTKEIRIPA…CHGHGRVEKS (79 aa)). 8 residues coordinate Zn(2+): Cys147, Cys150, Cys164, Cys167, Cys186, Cys189, Cys200, and Cys203. CXXCXGXG motif repeat units lie at residues 147 to 154 (CDVCHGNG), 164 to 171 (CPTCHGNG), 186 to 193 (CPHCHGRG), and 200 to 207 (CIKCHGHG).

Belongs to the DnaJ family. Homodimer. Requires Zn(2+) as cofactor.

It is found in the cytoplasm. In terms of biological role, participates actively in the response to hyperosmotic and heat shock by preventing the aggregation of stress-denatured proteins and by disaggregating proteins, also in an autonomous, DnaK-independent fashion. Unfolded proteins bind initially to DnaJ; upon interaction with the DnaJ-bound protein, DnaK hydrolyzes its bound ATP, resulting in the formation of a stable complex. GrpE releases ADP from DnaK; ATP binding to DnaK triggers the release of the substrate protein, thus completing the reaction cycle. Several rounds of ATP-dependent interactions between DnaJ, DnaK and GrpE are required for fully efficient folding. Also involved, together with DnaK and GrpE, in the DNA replication of plasmids through activation of initiation proteins. The sequence is that of Chaperone protein DnaJ from Pectobacterium atrosepticum (strain SCRI 1043 / ATCC BAA-672) (Erwinia carotovora subsp. atroseptica).